A 96-amino-acid polypeptide reads, in one-letter code: Co-chaperonin GroES (96 aa).

It belongs to the GroES chaperonin family. In terms of assembly, heptamer of 7 subunits arranged in a ring. Interacts with the chaperonin GroEL.

The protein resides in the cytoplasm. Functionally, together with the chaperonin GroEL, plays an essential role in assisting protein folding. The GroEL-GroES system forms a nano-cage that allows encapsulation of the non-native substrate proteins and provides a physical environment optimized to promote and accelerate protein folding. GroES binds to the apical surface of the GroEL ring, thereby capping the opening of the GroEL channel. The protein is Co-chaperonin GroES of Geobacter sp. (strain M21).